The primary structure comprises 361 residues: Putative agmatine deiminase (361 aa).

Catalysis depends on Cys354, which acts as the Amidino-cysteine intermediate.

The protein belongs to the agmatine deiminase family.

The enzyme catalyses agmatine + H2O = N-carbamoylputrescine + NH4(+). This Streptococcus pneumoniae (strain ATCC 700669 / Spain 23F-1) protein is Putative agmatine deiminase.